The sequence spans 310 residues: Mas-related G-protein coupled receptor member E (310 aa).

Residues 1–22 (MTSLSVHTDSPSTQGEMAFNLT) lie on the Extracellular side of the membrane. Residue asparagine 20 is glycosylated (N-linked (GlcNAc...) asparagine). Residues 23–43 (ILSLTELLSLGGLLGNGVALW) form a helical membrane-spanning segment. At 44 to 60 (LLNQNVYRNPFSIYLLD) the chain is on the cytoplasmic side. The chain crosses the membrane as a helical span at residues 61–81 (VACADLIFLCCHMVAIIPELL). The Extracellular portion of the chain corresponds to 82–92 (QDQLNFPEFVH). Residues 93 to 113 (ISLTMLRFFCYIVGLSLLAAI) traverse the membrane as a helical segment. The Cytoplasmic portion of the chain corresponds to 114-133 (STEQCLATLFPAWYLCRRPR). A helical membrane pass occupies residues 134 to 154 (YLTTCVCALIWVLCLLLDLLL). Over 155–174 (SGACTQFFGAPSYHLCDMLW) the chain is Extracellular. Residues 175 to 195 (LVVAVLLAALCCTMCVTSLLL) form a helical membrane-spanning segment. Residues 196–213 (LLRVERGPERHQPRGFPT) are Cytoplasmic-facing. A helical transmembrane segment spans residues 214-234 (LVLLAVLLFLFCGLPFGIFWL). Residues 235–248 (SKNLSWHIPLYFYH) are Extracellular-facing. The N-linked (GlcNAc...) asparagine glycan is linked to asparagine 237. The chain crosses the membrane as a helical span at residues 249–269 (FSFFMASVHSAAKPAIYFFLG). Topologically, residues 270–310 (STPGQRFREPLRLVLQRALGDEAELGAGREASQGGLVDMTV) are cytoplasmic.

Belongs to the G-protein coupled receptor 1 family. Mas subfamily.

It is found in the cell membrane. Orphan receptor. May regulate nociceptor function and/or development, including the sensation or modulation of pain. This chain is Mas-related G-protein coupled receptor member E (Mrgpre), found in Mus musculus (Mouse).